The chain runs to 148 residues: Snaclec stejaggregin-A subunit beta-3 (148 aa).

Residues 1–23 (MGRFISVSFGLLVVFLSLSGAGA) form the signal peptide. The cysteines at positions 27 and 38 are disulfide-linked. In terms of domain architecture, C-type lectin spans 34–145 (YDLYCYKVFK…CSRTHYVVCK (112 aa)). N-linked (GlcNAc...) asparagine glycosylation is found at Asn-47 and Asn-78. 2 disulfides stabilise this stretch: Cys-55-Cys-144 and Cys-121-Cys-136.

This sequence belongs to the snaclec family. Heteromultimer; disulfide-linked. As to expression, expressed by the venom gland.

Its subcellular location is the secreted. Functionally, interferes with one step of hemostasis (modulation of platelet aggregation, or coagulation cascade, for example). The protein is Snaclec stejaggregin-A subunit beta-3 of Trimeresurus stejnegeri (Chinese green tree viper).